Consider the following 480-residue polypeptide: UDP-glucose 6-dehydrogenase 5 (480 aa).

Residues 8 to 13, Asp33, Arg38, 86 to 90, 127 to 128, and Glu161 contribute to the NAD(+) site; these read GAGYVG, VNTPT, and ST. Substrate is bound by residues 157–161, 216–223, and 256–269; these read EFLAE, KLAANAFL, and RIGP…VGFG. The Nucleophile role is filled by Cys272. Residue 272-275 coordinates NAD(+); it reads CFQK. Position 334–335 (334–335) interacts with substrate; the sequence is FK. Residue Arg342 coordinates NAD(+). Phosphoserine is present on Ser393. Arg447 contacts substrate.

The protein belongs to the UDP-glucose/GDP-mannose dehydrogenase family.

It catalyses the reaction UDP-alpha-D-glucose + 2 NAD(+) + H2O = UDP-alpha-D-glucuronate + 2 NADH + 3 H(+). It participates in nucleotide-sugar biosynthesis; UDP-alpha-D-glucuronate biosynthesis; UDP-alpha-D-glucuronate from UDP-alpha-D-glucose: step 1/1. In terms of biological role, involved in the biosynthesis of UDP-glucuronic acid (UDP-GlcA), providing nucleotide sugars for cell-wall polymers. This Oryza sativa subsp. japonica (Rice) protein is UDP-glucose 6-dehydrogenase 5 (UGD5).